The following is a 267-amino-acid chain: Mediator of RNA polymerase II transcription subunit 18 (267 aa).

The protein belongs to the Mediator complex subunit 18 family. Component of the Mediator complex.

It is found in the nucleus. Its function is as follows. Component of the Mediator complex, a coactivator involved in the regulated transcription of nearly all RNA polymerase II-dependent genes. Mediator functions as a bridge to convey information from gene-specific regulatory proteins to the basal RNA polymerase II transcription machinery. Mediator is recruited to promoters by direct interactions with regulatory proteins and serves as a scaffold for the assembly of a functional preinitiation complex with RNA polymerase II and the general transcription factors. This Coccidioides immitis (strain RS) (Valley fever fungus) protein is Mediator of RNA polymerase II transcription subunit 18 (SRB5).